A 160-amino-acid polypeptide reads, in one-letter code: 17.9 kDa class II heat shock protein (160 aa).

One can recognise a sHSP domain in the interval 44-160; it reads DARAMAATPA…KPKTIQVQVA (117 aa).

This sequence belongs to the small heat shock protein (HSP20) family.

It localises to the cytoplasm. In Helianthus annuus (Common sunflower), this protein is 17.9 kDa class II heat shock protein (HSP17.9).